The following is a 240-amino-acid chain: Ribosomal RNA large subunit methyltransferase E (240 aa).

The interval methionine 1–glutamine 28 is disordered. The S-adenosyl-L-methionine site is built by glycine 80, tryptophan 82, aspartate 103, aspartate 119, and aspartate 143. The Proton acceptor role is filled by lysine 183.

The protein belongs to the class I-like SAM-binding methyltransferase superfamily. RNA methyltransferase RlmE family.

The protein resides in the cytoplasm. The enzyme catalyses uridine(2552) in 23S rRNA + S-adenosyl-L-methionine = 2'-O-methyluridine(2552) in 23S rRNA + S-adenosyl-L-homocysteine + H(+). In terms of biological role, specifically methylates the uridine in position 2552 of 23S rRNA at the 2'-O position of the ribose in the fully assembled 50S ribosomal subunit. This Azorhizobium caulinodans (strain ATCC 43989 / DSM 5975 / JCM 20966 / LMG 6465 / NBRC 14845 / NCIMB 13405 / ORS 571) protein is Ribosomal RNA large subunit methyltransferase E.